A 1104-amino-acid chain; its full sequence is Extended synaptotagmin-1 (1104 aa).

Met1 bears the N-acetylmethionine mark. At 1-38 the chain is on the cytoplasmic side; sequence MERSPGEGPSPSPTDQPSAPSDPTGQPPAAHAKPDPGS. Residues 1–47 form a disordered region; the sequence is MERSPGEGPSPSPTDQPSAPSDPTGQPPAAHAKPDPGSGGQPAGPGA. Residues 15–24 are compositionally biased toward polar residues; it reads DQPSAPSDPT. Over residues 37–47 the composition is skewed to gly residues; that stretch reads GSGGQPAGPGA. The chain crosses the membrane as a helical span at residues 39–59; sequence GGQPAGPGAAGEALAVLTSFG. The Lumenal portion of the chain corresponds to 60–62; the sequence is KRL. The helical transmembrane segment at 63–83 threads the bilayer; it reads LVLIPVYLAGAVGLSVGFVLF. Residues 84–1104 lie on the Cytoplasmic side of the membrane; the sequence is GLALYLGWRR…LMDDKDKGSS (1021 aa). A coiled-coil region spans residues 91 to 116; it reads WRRVRDEKERSLRAARQLLDDEEQLT. One can recognise an SMP-LTD domain in the interval 135–313; that stretch reads DVEKAEWLNK…LPNRLLVPLV (179 aa). 4 C2 domains span residues 312-433, 460-580, 627-751, and 777-899; these read LVPD…DDWF, QVLQ…QLSS, SVDA…DEWL, and LEEV…TLNS. Ser324 is modified (phosphoserine; by CDK5). Residues Lys344, Asp345, Asp357, Asp404, Asp406, Asp408, Asp410, and Asp411 each contribute to the Ca(2+) site. Disordered stretches follow at residues 617–641, 813–833, and 924–950; these read VDSENPQRGSSVDAPPRPCHTTPDS, RKGTKHPSPYATLTVGDTSHK, and SHSYSHSSSSLSEEPELSGGPPHVTSS. Lys817 is modified (N6-acetyllysine). Phosphoserine occurs at positions 820 and 941. The span at 925–946 shows a compositional bias: low complexity; the sequence is HSYSHSSSSLSEEPELSGGPPH. A Phosphothreonine modification is found at Thr948. Phosphoserine occurs at positions 949 and 963. Positions 971-1093 constitute a C2 5 domain; that stretch reads PLGQVKLTVW…DLSQGVARWY (123 aa). Tyr1009 bears the Phosphotyrosine mark. The tract at residues 1018–1025 is required for phosphatidylinositol 4,5-bisphosphate-dependent location at the cell membrane; it reads KNRGTKRK. A Phosphoserine modification is found at Ser1034.

Belongs to the extended synaptotagmin family. As to quaternary structure, interacts with ESYT2 and ESYT3. Interacts with ADGRD1; inhibiting the G-protein-coupled receptor activity of ADGRD1. Interaction with ADGRD1 is abolished when cytosolic calcium increases, relieving ADGRD1 G-protein-coupled receptor activity. Interacts (phosphorylated form) with SLC2A4. Post-translationally, phosphorylated on Ser residues in insulin-treated adipocytes (in vitro); this promotes interaction with SLC2A4.

Its subcellular location is the endoplasmic reticulum membrane. It is found in the cell membrane. Its function is as follows. Binds calcium (via the C2 domains) and translocates to sites of contact between the endoplasmic reticulum and the cell membrane in response to increased cytosolic calcium levels. Helps tether the endoplasmic reticulum to the cell membrane and promotes the formation of appositions between the endoplasmic reticulum and the cell membrane. Acts as an inhibitor of ADGRD1 G-protein-coupled receptor activity in absence of cytosolic calcium. Binds glycerophospholipids in a barrel-like domain and may play a role in cellular lipid transport. The chain is Extended synaptotagmin-1 (ESYT1) from Pongo abelii (Sumatran orangutan).